The following is a 193-amino-acid chain: Dephospho-CoA kinase (193 aa).

Positions Ile5–Ile193 constitute a DPCK domain. Residue Ala13–Thr18 participates in ATP binding.

Belongs to the CoaE family.

The protein resides in the cytoplasm. The catalysed reaction is 3'-dephospho-CoA + ATP = ADP + CoA + H(+). It functions in the pathway cofactor biosynthesis; coenzyme A biosynthesis; CoA from (R)-pantothenate: step 5/5. Functionally, catalyzes the phosphorylation of the 3'-hydroxyl group of dephosphocoenzyme A to form coenzyme A. In Fusobacterium nucleatum subsp. nucleatum (strain ATCC 25586 / DSM 15643 / BCRC 10681 / CIP 101130 / JCM 8532 / KCTC 2640 / LMG 13131 / VPI 4355), this protein is Dephospho-CoA kinase.